A 92-amino-acid chain; its full sequence is RIIa domain-containing protein 1 (92 aa).

The 35-residue stretch at 43–77 (KEVEWLISGFFREIFLKRPDNILEFAADYFTDPRL) folds into the RIIa domain.

The polypeptide is RIIa domain-containing protein 1 (RIIAD1) (Homo sapiens (Human)).